The primary structure comprises 630 residues: Chaperone protein DnaK (630 aa).

Residue T198 is modified to Phosphothreonine; by autocatalysis. The segment at 604 to 630 is disordered; sequence AAAAPGEEAPKDDDVVDAEFSEVDDKK. Acidic residues predominate over residues 617–630; it reads DVVDAEFSEVDDKK.

It belongs to the heat shock protein 70 family.

Acts as a chaperone. The polypeptide is Chaperone protein DnaK (Rhizorhabdus wittichii (strain DSM 6014 / CCUG 31198 / JCM 15750 / NBRC 105917 / EY 4224 / RW1) (Sphingomonas wittichii)).